Consider the following 433-residue polypeptide: Divergent protein kinase domain 2B (433 aa).

The first 31 residues, 1 to 31 (MEPQLGPEAAALRPGWLALLLWVSALSCSFS), serve as a signal peptide directing secretion. N-linked (GlcNAc...) asparagine glycosylation is present at Asn100.

The protein belongs to the DIPK family.

It localises to the secreted. The sequence is that of Divergent protein kinase domain 2B from Homo sapiens (Human).